The following is a 480-amino-acid chain: Aspartyl/glutamyl-tRNA(Asn/Gln) amidotransferase subunit B (480 aa).

The protein belongs to the GatB/GatE family. GatB subfamily. In terms of assembly, heterotrimer of A, B and C subunits.

It catalyses the reaction L-glutamyl-tRNA(Gln) + L-glutamine + ATP + H2O = L-glutaminyl-tRNA(Gln) + L-glutamate + ADP + phosphate + H(+). It carries out the reaction L-aspartyl-tRNA(Asn) + L-glutamine + ATP + H2O = L-asparaginyl-tRNA(Asn) + L-glutamate + ADP + phosphate + 2 H(+). Allows the formation of correctly charged Asn-tRNA(Asn) or Gln-tRNA(Gln) through the transamidation of misacylated Asp-tRNA(Asn) or Glu-tRNA(Gln) in organisms which lack either or both of asparaginyl-tRNA or glutaminyl-tRNA synthetases. The reaction takes place in the presence of glutamine and ATP through an activated phospho-Asp-tRNA(Asn) or phospho-Glu-tRNA(Gln). This is Aspartyl/glutamyl-tRNA(Asn/Gln) amidotransferase subunit B from Streptococcus agalactiae serotype Ia (strain ATCC 27591 / A909 / CDC SS700).